The chain runs to 313 residues: tRNA dimethylallyltransferase (313 aa).

ATP is bound at residue 20–27; that stretch reads GPTGTGKS. Residue 22 to 27 coordinates substrate; that stretch reads TGTGKS.

This sequence belongs to the IPP transferase family. In terms of assembly, monomer. Requires Mg(2+) as cofactor.

It catalyses the reaction adenosine(37) in tRNA + dimethylallyl diphosphate = N(6)-dimethylallyladenosine(37) in tRNA + diphosphate. Its function is as follows. Catalyzes the transfer of a dimethylallyl group onto the adenine at position 37 in tRNAs that read codons beginning with uridine, leading to the formation of N6-(dimethylallyl)adenosine (i(6)A). In Kocuria rhizophila (strain ATCC 9341 / DSM 348 / NBRC 103217 / DC2201), this protein is tRNA dimethylallyltransferase.